The chain runs to 202 residues: Adenylyl-sulfate kinase (202 aa).

An ATP-binding site is contributed by 31 to 38 (GLSASGKS). Ser-105 serves as the catalytic Phosphoserine intermediate.

It belongs to the APS kinase family.

The catalysed reaction is adenosine 5'-phosphosulfate + ATP = 3'-phosphoadenylyl sulfate + ADP + H(+). It functions in the pathway sulfur metabolism; hydrogen sulfide biosynthesis; sulfite from sulfate: step 2/3. Its function is as follows. Catalyzes the synthesis of activated sulfate. This chain is Adenylyl-sulfate kinase (MET14), found in Saccharomyces pastorianus (Lager yeast).